The primary structure comprises 159 residues: MSNFTHINASGEANMVDVSAKQETVREARAEAFVHMAPETLKLIVSGSHHKGDVFATARIAGIQAAKKTWDLIPLCHPLLLTKVEVQLEAIEAENMVRIESVCKLTGKTGVEMEALTAASVAALTIYDMCKAVQKDMVISQVRLLEKTGGKSGHFKADA.

Substrate is bound by residues 75 to 77 (LCH) and 113 to 114 (ME). Aspartate 128 is a catalytic residue.

It belongs to the MoaC family. As to quaternary structure, homohexamer; trimer of dimers.

The catalysed reaction is (8S)-3',8-cyclo-7,8-dihydroguanosine 5'-triphosphate = cyclic pyranopterin phosphate + diphosphate. It functions in the pathway cofactor biosynthesis; molybdopterin biosynthesis. Its function is as follows. Catalyzes the conversion of (8S)-3',8-cyclo-7,8-dihydroguanosine 5'-triphosphate to cyclic pyranopterin monophosphate (cPMP). The protein is Cyclic pyranopterin monophosphate synthase of Aliivibrio salmonicida (strain LFI1238) (Vibrio salmonicida (strain LFI1238)).